A 421-amino-acid polypeptide reads, in one-letter code: Histidine--tRNA ligase (421 aa).

Belongs to the class-II aminoacyl-tRNA synthetase family. As to quaternary structure, homodimer.

It localises to the cytoplasm. It catalyses the reaction tRNA(His) + L-histidine + ATP = L-histidyl-tRNA(His) + AMP + diphosphate + H(+). This Fervidobacterium nodosum (strain ATCC 35602 / DSM 5306 / Rt17-B1) protein is Histidine--tRNA ligase.